A 108-amino-acid chain; its full sequence is Trissin (108 aa).

The N-terminal stretch at 1 to 29 is a signal peptide; it reads MTKTTMHWLAHFQIILLCIWLMCPPSSQA. Cystine bridges form between C32–C43, C35–C52, and C39–C51. A propeptide spanning residues 57–108 is cleaved from the precursor; sequence RKRSDPDALRQSSNRRLIDFILLQGRALFTQELRERRHNGTLMDLGLNTYYP.

The protein localises to the secreted. Activates the G-protein coupled receptor TrissinR in vitro, leading to increased intracellular calcium ion levels. This is Trissin from Drosophila melanogaster (Fruit fly).